A 108-amino-acid chain; its full sequence is UPF0060 membrane protein YnfA (108 aa).

Topologically, residues M1 to T5 are periplasmic. Residues L6 to I26 form a helical membrane-spanning segment. Topologically, residues K27–A30 are cytoplasmic. Residues S31–L51 form a helical membrane-spanning segment. The Periplasmic segment spans residues H52 to Y60. Residues A61–V81 form a helical membrane-spanning segment. Residues R82–T84 lie on the Cytoplasmic side of the membrane. Residues V85–W105 traverse the membrane as a helical segment. Residues G106–T108 are Periplasmic-facing.

The protein belongs to the UPF0060 family.

Its subcellular location is the cell inner membrane. In Salmonella dublin (strain CT_02021853), this protein is UPF0060 membrane protein YnfA.